We begin with the raw amino-acid sequence, 180 residues long: MAAEEKDPLSYFAAYGSSSSDSSDENSEPEDAGRKEAASAPTTGGRGKQAEKRLPGPDELFRSVTRPAFLYNPLNKQIDWERHVVKAPEEPPKEFKIWKSNCVPPPETYTTEKKPPPPELDMAIKWSNIYEDNGDDAPQNAKKARLLPEGEETVESDDDKDERASKIRRVEPGEAAKKKK.

Disordered regions lie at residues 1–66 (MAAE…SVTR) and 96–180 (KIWK…KKKK). A compositionally biased stretch (basic and acidic residues) spans 48-61 (KQAEKRLPGPDELF). A Phosphothreonine modification is found at Thr-65. Tyr-130 carries the post-translational modification Phosphotyrosine. The segment covering 149-160 (EGEETVESDDDK) has biased composition (acidic residues). Ser-156 bears the Phosphoserine mark. Residues 161-180 (DERASKIRRVEPGEAAKKKK) show a composition bias toward basic and acidic residues.

This sequence belongs to the UPF0690 family.

This chain is UPF0690 protein C1orf52 homolog, found in Mus musculus (Mouse).